We begin with the raw amino-acid sequence, 363 residues long: NAD(P)H-quinone oxidoreductase subunit 1, chloroplastic (363 aa).

Helical transmembrane passes span 30 to 50 (LVPI…IVWL), 98 to 118 (FSIG…VIPF), 127 to 147 (LSIG…GLLM), 248 to 268 (YSGI…LVSS), 300 to 320 (VFGT…FLFI), and 336 to 356 (LLNL…LLTT).

It belongs to the complex I subunit 1 family. In terms of assembly, NDH is composed of at least 16 different subunits, 5 of which are encoded in the nucleus.

Its subcellular location is the plastid. It is found in the chloroplast thylakoid membrane. The enzyme catalyses a plastoquinone + NADH + (n+1) H(+)(in) = a plastoquinol + NAD(+) + n H(+)(out). The catalysed reaction is a plastoquinone + NADPH + (n+1) H(+)(in) = a plastoquinol + NADP(+) + n H(+)(out). Its function is as follows. NDH shuttles electrons from NAD(P)H:plastoquinone, via FMN and iron-sulfur (Fe-S) centers, to quinones in the photosynthetic chain and possibly in a chloroplast respiratory chain. The immediate electron acceptor for the enzyme in this species is believed to be plastoquinone. Couples the redox reaction to proton translocation, and thus conserves the redox energy in a proton gradient. This is NAD(P)H-quinone oxidoreductase subunit 1, chloroplastic from Drimys granadensis.